We begin with the raw amino-acid sequence, 508 residues long: Steroid 17-alpha-hydroxylase/17,20 lyase (508 aa).

Asn-202 is a binding site for substrate. A heme-binding site is contributed by Cys-442.

Belongs to the cytochrome P450 family. Requires heme as cofactor.

It is found in the endoplasmic reticulum membrane. The protein localises to the microsome membrane. The enzyme catalyses a C21-steroid + reduced [NADPH--hemoprotein reductase] + O2 = a 17alpha-hydroxy-C21-steroid + oxidized [NADPH--hemoprotein reductase] + H2O + H(+). It carries out the reaction progesterone + reduced [NADPH--hemoprotein reductase] + O2 = 17alpha-hydroxyprogesterone + oxidized [NADPH--hemoprotein reductase] + H2O + H(+). The catalysed reaction is pregnenolone + reduced [NADPH--hemoprotein reductase] + O2 = 17alpha-hydroxypregnenolone + oxidized [NADPH--hemoprotein reductase] + H2O + H(+). It catalyses the reaction 17alpha-hydroxypregnenolone + reduced [NADPH--hemoprotein reductase] + O2 = 3beta-hydroxyandrost-5-en-17-one + acetate + oxidized [NADPH--hemoprotein reductase] + H2O + 2 H(+). Its pathway is steroid hormone biosynthesis. The protein operates within steroid biosynthesis; glucocorticoid biosynthesis. Regulated predominantly by intracellular cAMP levels. The 17,20-lyase activity is stimulated by cytochrome b5, which acts as an allosteric effector increasing the Vmax of the lyase activity. Its function is as follows. A cytochrome P450 monooxygenase involved in corticoid and androgen biosynthesis. Catalyzes 17-alpha hydroxylation of C21 steroids, which is common for both pathways. A second oxidative step, required only for androgen synthesis, involves an acyl-carbon cleavage. Hydroxylates pregnenolone to form 17-alpha pregnenolone, followed by the cleavage of the C17-C20 bond to form dehydroepiandrosterone (DHEA). Has 17-alpha hydroxylase activity toward progesterone. The 17-alpha hydroxy intermediates, as part of adrenal glucocorticoids biosynthesis pathway, are precursors of cortisol. Mechanistically, uses molecular oxygen inserting one oxygen atom into a substrate, and reducing the second into a water molecule, with two electrons provided by NADPH via cytochrome P450 reductase (CPR; NADPH-ferrihemoprotein reductase). The protein is Steroid 17-alpha-hydroxylase/17,20 lyase (CYP17A1) of Papio hamadryas ursinus (Chacma baboon).